The sequence spans 383 residues: S-adenosylmethionine synthase (383 aa).

His15 provides a ligand contact to ATP. Asp17 contacts Mg(2+). Residue Glu43 participates in K(+) binding. Residues Glu56 and Gln99 each coordinate L-methionine. The interval 99–109 (QSPDINQGVDR) is flexible loop. ATP-binding positions include 164–166 (DAK), 230–231 (RF), Asp239, 245–246 (RK), Ala262, and Lys266. Asp239 provides a ligand contact to L-methionine. L-methionine is bound at residue Lys270.

It belongs to the AdoMet synthase family. Homotetramer; dimer of dimers. The cofactor is Mg(2+). K(+) serves as cofactor.

It is found in the cytoplasm. It carries out the reaction L-methionine + ATP + H2O = S-adenosyl-L-methionine + phosphate + diphosphate. It participates in amino-acid biosynthesis; S-adenosyl-L-methionine biosynthesis; S-adenosyl-L-methionine from L-methionine: step 1/1. Its function is as follows. Catalyzes the formation of S-adenosylmethionine (AdoMet) from methionine and ATP. The overall synthetic reaction is composed of two sequential steps, AdoMet formation and the subsequent tripolyphosphate hydrolysis which occurs prior to release of AdoMet from the enzyme. The polypeptide is S-adenosylmethionine synthase (Shewanella sp. (strain W3-18-1)).